The chain runs to 363 residues: Dihydroorotate dehydrogenase (quinone) (363 aa).

FMN is bound by residues Ala77–Lys81 and Thr101. Substrate is bound at residue Lys81. Asn126 to Phe130 contacts substrate. Positions 155 and 188 each coordinate FMN. Residue Asn188 participates in substrate binding. Ser191 serves as the catalytic Nucleophile. Asn193 contributes to the substrate binding site. The FMN site is built by Lys234 and Thr262. Asn263 to Thr264 is a binding site for substrate. FMN-binding positions include Gly287, Gly316, and Tyr337–Thr338.

Belongs to the dihydroorotate dehydrogenase family. Type 2 subfamily. In terms of assembly, monomer. FMN is required as a cofactor.

The protein localises to the cell membrane. It carries out the reaction (S)-dihydroorotate + a quinone = orotate + a quinol. It participates in pyrimidine metabolism; UMP biosynthesis via de novo pathway; orotate from (S)-dihydroorotate (quinone route): step 1/1. Its function is as follows. Catalyzes the conversion of dihydroorotate to orotate with quinone as electron acceptor. The chain is Dihydroorotate dehydrogenase (quinone) from Chloroflexus aurantiacus (strain ATCC 29366 / DSM 635 / J-10-fl).